We begin with the raw amino-acid sequence, 1486 residues long: Chromosome partition protein MukB (1486 aa).

Residue 34–41 (GGNGAGKS) participates in ATP binding. Coiled-coil stretches lie at residues 326–418 (LEAD…QYNQ), 444–480 (LETF…QAYQ), and 509–603 (RHLA…RAPV). The interval 666–783 (PGGSEDQRLN…EVPLFGRAAR (118 aa)) is flexible hinge. Coiled coils occupy residues 835-923 (EAEI…AKLE), 977-1115 (EMLS…TAKA), and 1209-1266 (VEAI…QNVS).

This sequence belongs to the SMC family. MukB subfamily. Homodimerization via its hinge domain. Binds to DNA via its C-terminal region. Interacts, and probably forms a ternary complex, with MukE and MukF via its C-terminal region. The complex formation is stimulated by calcium or magnesium. Interacts with tubulin-related protein FtsZ.

It is found in the cytoplasm. The protein localises to the nucleoid. Plays a central role in chromosome condensation, segregation and cell cycle progression. Functions as a homodimer, which is essential for chromosome partition. Involved in negative DNA supercoiling in vivo, and by this means organize and compact chromosomes. May achieve or facilitate chromosome segregation by condensation DNA from both sides of a centrally located replisome during cell division. In Escherichia coli O9:H4 (strain HS), this protein is Chromosome partition protein MukB.